The following is a 145-amino-acid chain: Large ribosomal subunit protein uL11 (145 aa).

The protein belongs to the universal ribosomal protein uL11 family. As to quaternary structure, part of the ribosomal stalk of the 50S ribosomal subunit. Interacts with L10 and the large rRNA to form the base of the stalk. L10 forms an elongated spine to which L12 dimers bind in a sequential fashion forming a multimeric L10(L12)X complex. One or more lysine residues are methylated.

Functionally, forms part of the ribosomal stalk which helps the ribosome interact with GTP-bound translation factors. This chain is Large ribosomal subunit protein uL11, found in Rickettsia felis (strain ATCC VR-1525 / URRWXCal2) (Rickettsia azadi).